The primary structure comprises 145 residues: Leghemoglobin-1 (145 aa).

Residues 3–145 form the Globin domain; the sequence is AFSDKQEALV…ELAAAIKKAY (143 aa). Tyr-26 and Tyr-31 each carry nitrated tyrosine. Ser-46 is a binding site for heme b. A Phosphoserine modification is found at Ser-46. His-62 contacts O2. Heme b contacts are provided by Lys-65, His-93, and Lys-96. Tyr-134 carries the nitrated tyrosine modification.

It belongs to the plant globin family. In terms of assembly, monomer. Nitrated in effective nodules and particularly in hypoxic conditions; this mechanism may play a protective role in the symbiosis by buffering toxic peroxynitrite NO(2)(-). Nitration level decrease during nodule senescence. Post-translationally, phosphorylation at Ser-46 disrupts the molecular environment of its porphyrin ring oxygen binding pocket, thus leading to a reduced oxygen consumption and to the delivery of oxygen O(2) to symbiosomes. As to expression, root nodules.

The protein resides in the cytoplasm. It is found in the cytosol. Its subcellular location is the nucleus. Functionally, leghemoglobin that reversibly binds oxygen O(2) through a pentacoordinated heme iron. In root nodules, facilitates the diffusion of oxygen to the bacteroids while preventing the bacterial nitrogenase from being inactivated by buffering dioxygen, nitric oxide and carbon monoxide, and promoting the formation of reactive oxygen species (ROS, e.g. H(2)O(2)). This role is essential for symbiotic nitrogen fixation (SNF). The chain is Leghemoglobin-1 from Vigna unguiculata (Cowpea).